The chain runs to 348 residues: Sec-independent protein translocase protein TatC (348 aa).

The next 6 helical transmembrane spans lie at 7–27, 162–182, 192–212, 244–264, 278–298, and 299–319; these read LCLT…MDIL, VVIS…PGLL, CMAV…FIVL, MILM…FVKL, YAIV…DVAT, and MMLM…LAWM.

Belongs to the TatC family. In terms of assembly, forms a complex with TatA.

The protein localises to the cell membrane. In terms of biological role, part of the twin-arginine translocation (Tat) system that transports large folded proteins containing a characteristic twin-arginine motif in their signal peptide across membranes. The protein is Sec-independent protein translocase protein TatC of Akkermansia muciniphila (strain ATCC BAA-835 / DSM 22959 / JCM 33894 / BCRC 81048 / CCUG 64013 / CIP 107961 / Muc).